Consider the following 366-residue polypeptide: 3-isopropylmalate dehydrogenase (366 aa).

76-89 (GPKWDHNPASLRPE) is an NAD(+) binding site. Residues arginine 96, arginine 106, arginine 134, and aspartate 222 each coordinate substrate. Mg(2+) contacts are provided by aspartate 222, aspartate 246, and aspartate 250. 280 to 292 (GSAPDIAGQGKAN) is an NAD(+) binding site.

Belongs to the isocitrate and isopropylmalate dehydrogenases family. LeuB type 1 subfamily. As to quaternary structure, homodimer. Mg(2+) serves as cofactor. Requires Mn(2+) as cofactor.

The protein localises to the cytoplasm. It catalyses the reaction (2R,3S)-3-isopropylmalate + NAD(+) = 4-methyl-2-oxopentanoate + CO2 + NADH. Its pathway is amino-acid biosynthesis; L-leucine biosynthesis; L-leucine from 3-methyl-2-oxobutanoate: step 3/4. Functionally, catalyzes the oxidation of 3-carboxy-2-hydroxy-4-methylpentanoate (3-isopropylmalate) to 3-carboxy-4-methyl-2-oxopentanoate. The product decarboxylates to 4-methyl-2 oxopentanoate. This chain is 3-isopropylmalate dehydrogenase (leuB), found in Heyndrickxia coagulans (Weizmannia coagulans).